The sequence spans 350 residues: Fe(2+) transport protein 2 (350 aa).

Positions 1–21 (MATTKLVYILLILFTFTVSPA) are cleaved as a signal peptide. Over 22-47 (ISTAPEHCDSGFDNPCINKAKALPLK) the chain is Extracellular. A helical transmembrane segment spans residues 48-68 (IVAIVAILTTSLIGVTSPLFS). Topologically, residues 69–80 (RYISFLRPDGNG) are cytoplasmic. The chain crosses the membrane as a helical span at residues 81 to 101 (FMIVKCFSSGIILGTGFMHVL). Residues 102 to 120 (PDSFEMLSSKCLSDNPWHK) are Extracellular-facing. The chain crosses the membrane as a helical span at residues 121–141 (FPFAGFVAMMSGLVTLAIDSI). The Cytoplasmic segment spans residues 142–195 (TTSLYTGKNSVGPVPDEEYGIDQEKAIHMVGHNHSHGHGVVLATKDDGQLLRYQ). The helical transmembrane segment at 196–216 (VIAMVLEVGILFHSVVIGLSL) threads the bilayer. Residues 217–227 (GATNDSCTIKG) are Extracellular-facing. Residues 228 to 248 (LIIALCFHHLFEGIGLGGCIL) traverse the membrane as a helical segment. The Cytoplasmic portion of the chain corresponds to 249 to 257 (QADFTNVKK). Residues 258 to 278 (FLMAFFFTGTTPCGIFLGIAL) traverse the membrane as a helical segment. Residues 279–289 (SSIYRDNSPTA) lie on the Extracellular side of the membrane. The helical transmembrane segment at 290 to 310 (LITIGLLNACSAGMLIYMALV) threads the bilayer. Residues 311–329 (DLLATEFMGSMLQGSIKLQ) lie on the Cytoplasmic side of the membrane. Residues 330-350 (IKCFTAALLGCAVMSVVAVWA) traverse the membrane as a helical segment.

This sequence belongs to the ZIP transporter (TC 2.A.5) family. In terms of tissue distribution, expressed in the external cell layers of the root subapical zone.

Its subcellular location is the cell membrane. Its function is as follows. High-affinity iron transporter that mediates under iron-deficiency the iron uptake from the rhizosphere across the plasma membrane in the root epidermal layer. Could also be capable of transporting zinc ions. This Arabidopsis thaliana (Mouse-ear cress) protein is Fe(2+) transport protein 2 (IRT2).